The primary structure comprises 676 residues: Methionine--tRNA ligase (676 aa).

Positions 15 to 25 (PYANGPIHLGH) match the 'HIGH' region motif. The Zn(2+) site is built by cysteine 146, cysteine 149, cysteine 159, and cysteine 162. Residues 332–336 (KMSKS) carry the 'KMSKS' region motif. ATP is bound at residue lysine 335. Positions 575–676 (DFAKIDLRIA…EGAQPGMRVK (102 aa)) constitute a tRNA-binding domain.

This sequence belongs to the class-I aminoacyl-tRNA synthetase family. MetG type 1 subfamily. Homodimer. It depends on Zn(2+) as a cofactor.

The protein resides in the cytoplasm. It catalyses the reaction tRNA(Met) + L-methionine + ATP = L-methionyl-tRNA(Met) + AMP + diphosphate. In terms of biological role, is required not only for elongation of protein synthesis but also for the initiation of all mRNA translation through initiator tRNA(fMet) aminoacylation. This is Methionine--tRNA ligase from Shewanella sp. (strain ANA-3).